A 724-amino-acid chain; its full sequence is MADQQKAGGCPVMHGAMTQVGESNLDMWPNALNLDILHQHDRKPDPMGEGFNYREEVKKLDLDAVKQDLHQLMTDSQAWWPADWGHYGGLMIRMAWHAAGTYRVADGRGGGGTGNQRFAPINSWPDNVNLDKARRLLWPIKKKYGNRLSWADLIILAGNVAYESMGLKTFGFSLGREDIWHPEKDIYWGSEKEWLAPSDSEDSRYGEDRASLENPLAAVMMGLIYVNPEGVDGNPDPLRTAEDVRITFERMAMNDEETVALTAGGHTVGKCHGNGDVENLGPDPESADVEEQGLGWNNKVTRGVGRDTVSSGIEGAWTTYPTRWDNGYFHLLLNYEWELTKSPAGAWQWEPVDIKEEDKPVDVEDPSIRLNPIMTDADMAMKMDPAYRKISERFYNDPAYFDEVFARAWFKLTHRDLGPRTRYIGPEAPQEDLIWQDPVPAGRTDYDVEALKAKIADSGLSIGEMVSTAWDSARTFRGSDNRGGANGARIRLAPQKDWEGNEPERLSKVLGVLEGIAADAGASLADTIVLAGNVGIEQAARAAGHDITVPFAPGRGDASQEMTDVDSFQYLEPLADGYRNWVKKEYAVQPEEMMLDRTQLMGLTAPEMTVLVGGMRVLGTNHGGTKHGVLTDREGQLTNDFFVNLTDMAYTWKPVGSNRYEIRQRSSDAVKWTATRVDLVFGSNSILRSYAEVYAQDDNREKFVHDFVAAWTKVMNADRFDLVA.

A cross-link (tryptophyl-tyrosyl-methioninium (Trp-Tyr) (with M-251)) is located at residues 96-225 (WHAAGTYRVA…LAAVMMGLIY (130 aa)). Catalysis depends on histidine 97, which acts as the Proton acceptor. Positions 225–251 (YVNPEGVDGNPDPLRTAEDVRITFERM) form a cross-link, tryptophyl-tyrosyl-methioninium (Tyr-Met) (with W-96). Histidine 266 contributes to the heme b binding site.

The protein belongs to the peroxidase family. Peroxidase/catalase subfamily. In terms of assembly, homodimer or homotetramer. Requires heme b as cofactor. In terms of processing, formation of the three residue Trp-Tyr-Met cross-link is important for the catalase, but not the peroxidase activity of the enzyme.

It carries out the reaction H2O2 + AH2 = A + 2 H2O. The catalysed reaction is 2 H2O2 = O2 + 2 H2O. In terms of biological role, bifunctional enzyme with both catalase and broad-spectrum peroxidase activity. This is Catalase-peroxidase from Halorhodospira halophila (strain DSM 244 / SL1) (Ectothiorhodospira halophila (strain DSM 244 / SL1)).